Here is a 1558-residue protein sequence, read N- to C-terminus: MTSEDKTALCAENILNDIYILTINRNIDIDIIQEGLLRKVMDEEESNSILFLEDSSFSKNDISILNVHLKIEDGKNKYNNYYEFKYADINVTIDFYQKECKYSIEKSNMHKCHYFKMMNKINYITEQKMDFKDSILYLYNTINDKNFFKCPCWLNDNKNIKLNNIINDHQQKKKKKNLYDKSVQVTNDVTNIMVNEIQEQKMKKPIFFDNKNDLNNSDDEFNSAHSSLIKINKLLNVEENDIFHNLKGHVYEEYFDKHEDNKNQKDNIESNIIVKDKKDRANNIISEQMKEDYIKNVEEVLSKHINNNKNNNVEDSVSLYSLDEEISEQIDKQHFFSIDKRQDEISNFIQMEENINDHMNDNINKMGKKKHGKENRVVEDEKYIQDDKKKKRFYRNVNDNIPLTVQLANKGNEICKEIIEMNSRYYRDFFEEKILGCGGFGYVMKVKNKKFNITYALKIIRLSNSKYNTQTNNKHINEKDNNSYIMEEAIMIAKLQHENIVRYYDAWVEENVDFFLYKELQNEFKNIKIKIKNEKMKNEKMKNEKIISGKIKNENIKSENIKSENIKSENIKSENIKSEKVKNLYIEEIKYFWNHYKKNKDPNVNDKYLYILMEYCPGKTLREAIDCGFICRNEKLIWELIKQILKGISYIHDMKIMHRDIKPSNIFLQITDNILIAKIGDFGLTTRIGDTQINPSAGTIHYISPEQLNGEPFNEKADIFSLGVVFFEMFHEPFSTSMERSITLSNLLKGIYPEYMKADNKKFQFLSSLLAINPQERCCAYNLLHESVLFTFEKDFTDIYNLIDNKRNCEEVHTIISTLFDKFEYLNSDKILKKEDFSTFQNAKIFTDDLEMRKKQKIIKKKILISLKKRGAIFILTPIILLNKYYINLENTYMEEYNIYYNINKKKENKINNIYINTNKNKNIDNLIYMLDIYGNSITLRNSFFLSFAEYIYESIDSYNKYNEDNLFYKFYTYGYTYKNQIIKSNKHIKKDTINNNINTTINITTTTCNTTTGTSTNNNNNNNNNNMGNNNIGNNMGNNVSNIISNNNINNHMISNNPFYFYNIYPDENEKMFYCILSSSKNVFGNEELNYLSIFSNADIMVSIYTLYNHINYFNKLLFVWSYIDLLEIILKECLDIPNDISYHLSIDLKKNSTLLVNKSFVMSLLQKYKIKDMSKISDHILSLFYIKCESNKVDDYLNNIYNFVDDLLNKKSSLQLKRNTSITPKEVPYVRSRSNNISTSASKIIKYDIQKNVGTKEKGNQNDNEKKKMQIYSILDRIKKINNFICTNTVINNTCFDLFLNYEESIFCNEVIFYVICESKNKEIIAYGGRFDEIIRNMANEVKYKNHANYKYVYNNIKDIYNNNNNNNNNDNNIMNIKAYGVEIYLDKIYSKVIESNEKISIHLQYNPSTDKSQLFKNFVTSCQQNDFACTSHIIQQPLLNDDYLNYSSTKILIQVYEISNLLIAYDLSKKLLTKNISSYTHLSINNVNIKKKIKNFKPHKIQFFITIKSNNTDNSFDALKPINFDNVVYKIVNYDDQDCNFMDQAELINYLIKYF.

The 361-residue stretch at 429–789 folds into the Protein kinase domain; that stretch reads FFEEKILGCG…AYNLLHESVL (361 aa). ATP is bound by residues 435 to 443 and K458; that span reads LGCGGFGYV. Catalysis depends on D660, which acts as the Proton acceptor. The disordered stretch occupies residues 1014–1033; the sequence is GTSTNNNNNNNNNNMGNNNI.

This sequence belongs to the protein kinase superfamily. Ser/Thr protein kinase family. GCN2 subfamily. Auto-phosphorylated.

It catalyses the reaction L-seryl-[protein] + ATP = O-phospho-L-seryl-[protein] + ADP + H(+). It carries out the reaction L-threonyl-[protein] + ATP = O-phospho-L-threonyl-[protein] + ADP + H(+). Functionally, in blood stage parasites, phosphorylates translation factor eIF2alpha in response to amino acid starvation. During the asexual blood stage, involved in the response to the host hormone melatonin which is used by the parasite to modulate its cell cycle. The polypeptide is Eukaryotic translation initiation factor 2-alpha kinase 1 (Plasmodium falciparum (isolate 3D7)).